Reading from the N-terminus, the 154-residue chain is Myoglobin (154 aa).

In terms of domain architecture, Globin spans Val2–Lys148. Ser4 is modified (phosphoserine). His65 provides a ligand contact to nitrite. His65 provides a ligand contact to O2. Residue Thr68 is modified to Phosphothreonine. A heme b-binding site is contributed by His94.

The protein belongs to the globin family. Monomeric.

It localises to the cytoplasm. It is found in the sarcoplasm. The catalysed reaction is Fe(III)-heme b-[protein] + nitric oxide + H2O = Fe(II)-heme b-[protein] + nitrite + 2 H(+). It carries out the reaction H2O2 + AH2 = A + 2 H2O. In terms of biological role, monomeric heme protein which primary function is to store oxygen and facilitate its diffusion within muscle tissues. Reversibly binds oxygen through a pentacoordinated heme iron and enables its timely and efficient release as needed during periods of heightened demand. Depending on the oxidative conditions of tissues and cells, and in addition to its ability to bind oxygen, it also has a nitrite reductase activity whereby it regulates the production of bioactive nitric oxide. Under stress conditions, like hypoxia and anoxia, it also protects cells against reactive oxygen species thanks to its pseudoperoxidase activity. This Megaptera novaeangliae (Humpback whale) protein is Myoglobin (MB).